The sequence spans 145 residues: Maximins 3/H9 type 1 (145 aa).

Positions 1-18 (MNFKYIVAVSFLIASAYA) are cleaved as a signal peptide. 2 consecutive propeptides follow at residues 19–43 (RSVQ…LREI) and 74–124 (RTAE…KEKR). Ile-144 is subject to Isoleucine amide.

The protein belongs to the bombinin family. As to expression, expressed by the skin glands.

Its subcellular location is the secreted. In terms of biological role, maximin-3 shows antibacterial activity against both Gram-positive and Gram-negative bacteria. It also shows antimicrobial activity against the fungus C.albicans, but not against A.flavus nor P.uticale. It has little hemolytic activity. It possess a significant cytotoxicity against tumor cell lines. It possess a significant anti-HIV activity. It shows high spermicidal activity. Its function is as follows. Maximin-H9 shows antimicrobial activity against bacteria and against the fungus C.albicans. Shows strong hemolytic activity. The protein is Maximins 3/H9 type 1 of Bombina maxima (Giant fire-bellied toad).